The primary structure comprises 208 residues: EF-hand protein 5 variant 2 (208 aa).

The disordered stretch occupies residues 1-35 (MQARGTVKVQGDANVDGKMSTGQHPHHQHLNSTQA). EF-hand domains are found at residues 64 to 98 (MAEG…HLTE), 99 to 134 (EEFH…EVDD), 135 to 170 (TMAD…LAER), and 171 to 206 (STPE…SRVN). Ca(2+) is bound by residues glutamate 118, aspartate 123, aspartate 148, threonine 152, and tyrosine 154.

This is EF-hand protein 5 variant 2 from Trypanosoma cruzi.